A 235-amino-acid chain; its full sequence is Probable GTP-binding protein EngB (235 aa).

The region spanning 23-219 (QVPEIAFAGR…NDKIIELLGL (197 aa)) is the EngB-type G domain. Residues 31–38 (GRSNAGKS), 58–62 (GRTQH), 92–95 (DLPG), 159–162 (TKSD), and 193–200 (FTAQMFSA) each bind GTP. Residues S38 and T60 each contribute to the Mg(2+) site.

The protein belongs to the TRAFAC class TrmE-Era-EngA-EngB-Septin-like GTPase superfamily. EngB GTPase family. Requires Mg(2+) as cofactor.

Its function is as follows. Necessary for normal cell division and for the maintenance of normal septation. This Janthinobacterium sp. (strain Marseille) (Minibacterium massiliensis) protein is Probable GTP-binding protein EngB.